Reading from the N-terminus, the 164-residue chain is Probable calcium-binding protein CML17 (164 aa).

4 EF-hand domains span residues 4–39 (DQQA…LGMP), 40–75 (VHRE…VMRV), 88–123 (VDEA…LGIK), and 126–161 (RTAE…GAFA). 19 residues coordinate Ca(2+): Asp17, Asp19, Asp21, Arg23, Glu28, Asp53, Asn55, Asp57, Cys59, Glu64, Asp101, Asn103, Asp105, Glu112, Asp139, Asp141, Asp143, Arg145, and Glu150.

Potential calcium sensor. The polypeptide is Probable calcium-binding protein CML17 (CML17) (Oryza sativa subsp. japonica (Rice)).